A 265-amino-acid polypeptide reads, in one-letter code: Probable S-methyl-5'-thioinosine phosphorylase (265 aa).

Residues Ser-15 and 55–56 each bind phosphate; that span reads RH. Position 187 (Met-187) interacts with substrate. Thr-188 lines the phosphate pocket. 211–213 provides a ligand contact to substrate; sequence NYA.

Belongs to the PNP/MTAP phosphorylase family. MTAP subfamily. In terms of assembly, homotrimer.

It carries out the reaction S-methyl-5'-thioinosine + phosphate = 5-(methylsulfanyl)-alpha-D-ribose 1-phosphate + hypoxanthine. The protein operates within purine metabolism; purine nucleoside salvage. Its function is as follows. Catalyzes the reversible phosphorylation of S-methyl-5'-thioinosine (MTI) to hypoxanthine and 5-methylthioribose-1-phosphate. Involved in the breakdown of S-methyl-5'-thioadenosine (MTA), a major by-product of polyamine biosynthesis. Catabolism of (MTA) occurs via deamination to MTI and phosphorolysis to hypoxanthine. This chain is Probable S-methyl-5'-thioinosine phosphorylase, found in Thermodesulfovibrio yellowstonii (strain ATCC 51303 / DSM 11347 / YP87).